Reading from the N-terminus, the 528-residue chain is 3-ketoacyl-CoA synthase 2 (528 aa).

2 helical membrane-spanning segments follow: residues 36–56 (LGYH…VGLL) and 78–98 (FHFL…TLYF). Residues 97–388 (YFTTRPRRIF…FFATLVARKV (292 aa)) enclose the FAE domain. Residues Cys-241, His-320, His-407, His-411, and Asn-444 contribute to the active site.

Belongs to the thiolase-like superfamily. Chalcone/stilbene synthases family. As to expression, expressed in siliques, flowers and stems. In young seedlings, expressed in the central cylinder of primary roots, in emerging lateral roots and in their root cap, but not in aboveground tissues such as hypocotyls, cotyledons and leaves. Expressed in sepals in mature flowers and in the chalaza and micropyle region of developing seeds shortly prior to or just after the detachment from the funiculus. Expressed in roots, flowers, cauline leaves and siliques.

The protein localises to the membrane. It carries out the reaction a very-long-chain acyl-CoA + malonyl-CoA + H(+) = a very-long-chain 3-oxoacyl-CoA + CO2 + CoA. The protein operates within lipid metabolism; fatty acid biosynthesis. With respect to regulation, inhibited by K3 herbicides such as allidochlor, anilofos, cafenstrole and flufenacet. Strongly inhibited by metazachlor. Mediates the synthesis of VLCFAs from 22 to 26 carbons in length (e.g. C22, C24, C26). Involved in the elongation of C20 fatty acid suberin precursors. Functionally redundant with KCS20 in the two-carbon elongation of C22 fatty acids that is required for cuticular wax and root suberin biosynthesis. In Arabidopsis thaliana (Mouse-ear cress), this protein is 3-ketoacyl-CoA synthase 2.